The following is a 154-amino-acid chain: Golgi-associated plant pathogenesis-related protein 1 (154 aa).

The tract at residues Met-1–Arg-21 is disordered. Gly-2 carries the N-myristoyl glycine lipid modification. The segment covering Phe-9–Arg-21 has biased composition (basic and acidic residues). In terms of domain architecture, SCP spans Leu-14 to Arg-132. Positions Lys-30–Lys-53 form a coiled coil. Positions Asn-91–Thr-98 are interaction with CAV1.

It belongs to the CRISP family. Homodimer. Interacts with CAV1. As to expression, highest expression in lung and peripheral leukocytes, and minor expression in liver and kidney.

It is found in the golgi apparatus membrane. The chain is Golgi-associated plant pathogenesis-related protein 1 (GLIPR2) from Homo sapiens (Human).